The sequence spans 570 residues: Proline--tRNA ligase (570 aa).

It belongs to the class-II aminoacyl-tRNA synthetase family. ProS type 1 subfamily. Homodimer.

It localises to the cytoplasm. It carries out the reaction tRNA(Pro) + L-proline + ATP = L-prolyl-tRNA(Pro) + AMP + diphosphate. In terms of biological role, catalyzes the attachment of proline to tRNA(Pro) in a two-step reaction: proline is first activated by ATP to form Pro-AMP and then transferred to the acceptor end of tRNA(Pro). As ProRS can inadvertently accommodate and process non-cognate amino acids such as alanine and cysteine, to avoid such errors it has two additional distinct editing activities against alanine. One activity is designated as 'pretransfer' editing and involves the tRNA(Pro)-independent hydrolysis of activated Ala-AMP. The other activity is designated 'posttransfer' editing and involves deacylation of mischarged Ala-tRNA(Pro). The misacylated Cys-tRNA(Pro) is not edited by ProRS. This chain is Proline--tRNA ligase, found in Neisseria gonorrhoeae (strain ATCC 700825 / FA 1090).